Here is a 417-residue protein sequence, read N- to C-terminus: Glucose-1-phosphatase (417 aa).

The N-terminal stretch at 1 to 23 is a signal peptide; the sequence is MKYKVLTLCLSAALFAPIAPTMA. Arg41 provides a ligand contact to substrate. His42 acts as the Nucleophile in catalysis. Residues Arg45, Arg118, and Glu220 each contribute to the substrate site. Asp315 functions as the Proton donor in the catalytic mechanism.

Belongs to the histidine acid phosphatase family. In terms of assembly, homodimer.

Its subcellular location is the periplasm. It catalyses the reaction alpha-D-glucose 1-phosphate + H2O = D-glucose + phosphate. The polypeptide is Glucose-1-phosphatase (agp) (Providencia rettgeri).